A 421-amino-acid polypeptide reads, in one-letter code: MSKLTIVRGFNDVLPLDSYKWQFLESKVKLILDRYNYSETRLPIVERSELFHRSVGESSDIVSKETYDFQDRNGDSLTLRPEGTAGCVRMVIENNLATRGQTQKLWYCGPMFRYERPQKGRYRQFYQLGVEAYGFDGIAIDLEVIAIAWSLFKELGISEYVTLELNSLGSSLNRQEYTQALLQYLKPYHAELDEDSIKRLDKNPLRILDSKIEKTQKILANAPKLIDFIDHDLRLRFKQTCQYLDALGVRYKLNENLVRGLDYYTGLVFEWTTDKLGSQSAICAGGRYDGLVENLGGQKTAAIGFAIGMERLLLLLEDLGKLPNQDNACDVFFILDSAQLHQSLAIVENIRQELPQLKIDMDLKFGSFKSQFKKADKSGAKVAIIIGQDELDNGFAGIKFLQQNEEQQQVAFNELINFLER.

This sequence belongs to the class-II aminoacyl-tRNA synthetase family. As to quaternary structure, homodimer.

It localises to the cytoplasm. The catalysed reaction is tRNA(His) + L-histidine + ATP = L-histidyl-tRNA(His) + AMP + diphosphate + H(+). The polypeptide is Histidine--tRNA ligase (Francisella tularensis subsp. holarctica (strain FTNF002-00 / FTA)).